The sequence spans 376 residues: Putative C-mannosyltransferase DPY19L2P2 (376 aa).

N-linked (GlcNAc...) asparagine glycosylation occurs at Asn32. Transmembrane regions (helical) follow at residues 52 to 72, 107 to 127, 154 to 174, 182 to 202, 233 to 253, and 299 to 319; these read ACFY…LFFI, LRES…TLIL, AQFI…VGYI, IIYM…GNSM, LNCW…LKFL, and LLIY…CFIF.

The protein belongs to the dpy-19 family. Fibroblast, lung, lymphoblast, spleen and testis.

Its subcellular location is the membrane. Its function is as follows. Probable C-mannosyltransferase that mediates C-mannosylation of tryptophan residues on target proteins. The sequence is that of Putative C-mannosyltransferase DPY19L2P2 (DPY19L2P2) from Homo sapiens (Human).